Reading from the N-terminus, the 183-residue chain is uncharacterized protein (183 aa).

This is an uncharacterized protein from Acanthamoeba polyphaga mimivirus (APMV).